The following is a 250-amino-acid chain: Ubiquinone/menaquinone biosynthesis C-methyltransferase UbiE (250 aa).

Residues S73, D94, and 122–123 (NA) each bind S-adenosyl-L-methionine.

This sequence belongs to the class I-like SAM-binding methyltransferase superfamily. MenG/UbiE family.

The enzyme catalyses a 2-demethylmenaquinol + S-adenosyl-L-methionine = a menaquinol + S-adenosyl-L-homocysteine + H(+). The catalysed reaction is a 2-methoxy-6-(all-trans-polyprenyl)benzene-1,4-diol + S-adenosyl-L-methionine = a 5-methoxy-2-methyl-3-(all-trans-polyprenyl)benzene-1,4-diol + S-adenosyl-L-homocysteine + H(+). Its pathway is quinol/quinone metabolism; menaquinone biosynthesis; menaquinol from 1,4-dihydroxy-2-naphthoate: step 2/2. It participates in cofactor biosynthesis; ubiquinone biosynthesis. Methyltransferase required for the conversion of demethylmenaquinol (DMKH2) to menaquinol (MKH2) and the conversion of 2-polyprenyl-6-methoxy-1,4-benzoquinol (DDMQH2) to 2-polyprenyl-3-methyl-6-methoxy-1,4-benzoquinol (DMQH2). The chain is Ubiquinone/menaquinone biosynthesis C-methyltransferase UbiE from Legionella pneumophila (strain Corby).